The primary structure comprises 145 residues: D-aminoacyl-tRNA deacylase (145 aa).

The Gly-cisPro motif, important for rejection of L-amino acids motif lies at 137-138 (GP).

It belongs to the DTD family. As to quaternary structure, homodimer.

It is found in the cytoplasm. The catalysed reaction is glycyl-tRNA(Ala) + H2O = tRNA(Ala) + glycine + H(+). The enzyme catalyses a D-aminoacyl-tRNA + H2O = a tRNA + a D-alpha-amino acid + H(+). Functionally, an aminoacyl-tRNA editing enzyme that deacylates mischarged D-aminoacyl-tRNAs. Also deacylates mischarged glycyl-tRNA(Ala), protecting cells against glycine mischarging by AlaRS. Acts via tRNA-based rather than protein-based catalysis; rejects L-amino acids rather than detecting D-amino acids in the active site. By recycling D-aminoacyl-tRNA to D-amino acids and free tRNA molecules, this enzyme counteracts the toxicity associated with the formation of D-aminoacyl-tRNA entities in vivo and helps enforce protein L-homochirality. The chain is D-aminoacyl-tRNA deacylase from Limosilactobacillus reuteri (strain DSM 20016) (Lactobacillus reuteri).